Reading from the N-terminus, the 206-residue chain is Small ribosomal subunit protein uS4 (206 aa).

An S4 RNA-binding domain is found at 96 to 156; that stretch reads RRLDNVVYRM…DKSKNQSRIK (61 aa).

Belongs to the universal ribosomal protein uS4 family. Part of the 30S ribosomal subunit. Contacts protein S5. The interaction surface between S4 and S5 is involved in control of translational fidelity.

One of the primary rRNA binding proteins, it binds directly to 16S rRNA where it nucleates assembly of the body of the 30S subunit. Functionally, with S5 and S12 plays an important role in translational accuracy. The chain is Small ribosomal subunit protein uS4 from Buchnera aphidicola subsp. Schizaphis graminum (strain Sg).